The chain runs to 311 residues: Probable branched-chain-amino-acid aminotransferase (311 aa).

An N6-(pyridoxal phosphate)lysine modification is found at lysine 160.

The protein belongs to the class-IV pyridoxal-phosphate-dependent aminotransferase family. Pyridoxal 5'-phosphate is required as a cofactor.

The catalysed reaction is L-leucine + 2-oxoglutarate = 4-methyl-2-oxopentanoate + L-glutamate. It catalyses the reaction L-isoleucine + 2-oxoglutarate = (S)-3-methyl-2-oxopentanoate + L-glutamate. The enzyme catalyses L-valine + 2-oxoglutarate = 3-methyl-2-oxobutanoate + L-glutamate. Its pathway is amino-acid biosynthesis; L-isoleucine biosynthesis; L-isoleucine from 2-oxobutanoate: step 4/4. The protein operates within amino-acid biosynthesis; L-leucine biosynthesis; L-leucine from 3-methyl-2-oxobutanoate: step 4/4. It functions in the pathway amino-acid biosynthesis; L-valine biosynthesis; L-valine from pyruvate: step 4/4. Acts on leucine, isoleucine and valine. This Aquifex aeolicus (strain VF5) protein is Probable branched-chain-amino-acid aminotransferase (ilvE).